The chain runs to 184 residues: Protein OPG161 (184 aa).

Residues 1 to 33 lie on the Intravirion side of the membrane; sequence MMTPENDEEQTSVFSATVYGDKIQGKNKRKRVI. The helical transmembrane segment at 34–56 threads the bilayer; it reads GICIRISMVISLLSMITMSAFLI. Residues 57-184 lie on the Virion surface side of the membrane; it reads VRLNQCMSAN…RKYFCVKTMN (128 aa). A C-type lectin-like domain region spans residues 98 to 184; the sequence is SCNGLYYQGS…RKYFCVKTMN (87 aa). The N-linked (GlcNAc...) asparagine; by host glycan is linked to Asn-134.

Belongs to the orthopoxvirus OPG161 family. Homodimer, disulfide-linked. Interacts with protein OPG190. Interacts (via C-terminus) with protein OPG164. Interacts with OPG162.

Its subcellular location is the virion membrane. The protein localises to the host membrane. Its function is as follows. Forms a complex with OPG162 and OPG190 to coordinate the incorporation of OPG164 into wrapped enveloped virion (EV) membranes and, subsequently, the production of actin tails. Therefore plays an essential role in efficient cell-to-cell spread of viral particles. The chain is Protein OPG161 (OPG161) from Homo sapiens (Human).